An 87-amino-acid polypeptide reads, in one-letter code: MGEVKFYLVEGRMLIRHDRMPEWWKFRKYVRALKPEHAVEKVLSELGSNHKVKRYHVKIERVVEVPPEEVPDRTLLVLASLTRWVKP.

This sequence belongs to the eukaryotic ribosomal protein eL20 family. As to quaternary structure, part of the 50S ribosomal subunit. Binds 23S rRNA.

The polypeptide is Large ribosomal subunit protein eL20 (Hyperthermus butylicus (strain DSM 5456 / JCM 9403 / PLM1-5)).